The chain runs to 186 residues: Lipid A acyltransferase PagP (186 aa).

An N-terminal signal peptide occupies residues 1-25 (MNVSKYVAIFSFVFIQLISVGKVFA). Active-site residues include His-58, Asp-101, and Ser-102.

Belongs to the lipid A palmitoyltransferase family. Homodimer.

The protein localises to the cell outer membrane. It catalyses the reaction a lipid A + a 1,2-diacyl-sn-glycero-3-phosphocholine = a hepta-acyl lipid A + a 2-acyl-sn-glycero-3-phosphocholine. The catalysed reaction is a lipid IVA + a 1,2-diacyl-sn-glycero-3-phosphocholine = a lipid IVB + a 2-acyl-sn-glycero-3-phosphocholine. It carries out the reaction a lipid IIA + a 1,2-diacyl-sn-glycero-3-phosphocholine = a lipid IIB + a 2-acyl-sn-glycero-3-phosphocholine. Its function is as follows. Transfers a fatty acid residue from the sn-1 position of a phospholipid to the N-linked hydroxyfatty acid chain on the proximal unit of lipid A or its precursors. The sequence is that of Lipid A acyltransferase PagP from Shigella boydii serotype 4 (strain Sb227).